Here is a 495-residue protein sequence, read N- to C-terminus: ATP synthase subunit beta, chloroplastic (495 aa).

ATP is bound at residue 172–179; it reads GGAGVGKT.

This sequence belongs to the ATPase alpha/beta chains family. F-type ATPases have 2 components, CF(1) - the catalytic core - and CF(0) - the membrane proton channel. CF(1) has five subunits: alpha(3), beta(3), gamma(1), delta(1), epsilon(1). CF(0) has four main subunits: a(1), b(1), b'(1) and c(9-12).

The protein localises to the plastid. The protein resides in the chloroplast thylakoid membrane. The catalysed reaction is ATP + H2O + 4 H(+)(in) = ADP + phosphate + 5 H(+)(out). Produces ATP from ADP in the presence of a proton gradient across the membrane. The catalytic sites are hosted primarily by the beta subunits. In Eucomis bicolor (King's flower), this protein is ATP synthase subunit beta, chloroplastic.